Here is a 277-residue protein sequence, read N- to C-terminus: Histone-lysine N-methyltransferase set-17 (277 aa).

The 112-residue stretch at 135-246 (FRIEESKLPN…INQELLVWYG (112 aa)) folds into the SET domain. Y245 serves as a coordination point for S-adenosyl-L-methionine.

The protein belongs to the class V-like SAM-binding methyltransferase superfamily. As to expression, expressed in the germline. Predominantly expressed in primary spermatocytes. Also expressed in the oocyte-producing germline of hermaphrodites.

It localises to the nucleus. It carries out the reaction N(6)-methyl-L-lysyl(4)-[histone H3] + S-adenosyl-L-methionine = N(6),N(6)-dimethyl-L-lysyl(4)-[histone H3] + S-adenosyl-L-homocysteine + H(+). The catalysed reaction is L-lysyl(4)-[histone H3] + S-adenosyl-L-methionine = N(6)-methyl-L-lysyl(4)-[histone H3] + S-adenosyl-L-homocysteine + H(+). Functionally, histone methyltransferase that specifically mono- and di-methylates 'Lys-4' of histone H3 in vitro. Does not tri-methylate 'Lys-4' of histone H3 in vitro. Promotes spermatid development and fertility by positively regulating the transcription of spermatocyte-specific genes in primary spermatocytes. Together with spr-5, required for transgenerational fertility. This Caenorhabditis elegans protein is Histone-lysine N-methyltransferase set-17.